The following is a 126-amino-acid chain: Large ribosomal subunit protein bL17 (126 aa).

This sequence belongs to the bacterial ribosomal protein bL17 family. Part of the 50S ribosomal subunit. Contacts protein L32.

The chain is Large ribosomal subunit protein bL17 from Nitrosococcus oceani (strain ATCC 19707 / BCRC 17464 / JCM 30415 / NCIMB 11848 / C-107).